A 689-amino-acid polypeptide reads, in one-letter code: Glycine--tRNA ligase beta subunit (689 aa).

It belongs to the class-II aminoacyl-tRNA synthetase family. In terms of assembly, tetramer of two alpha and two beta subunits.

The protein resides in the cytoplasm. The enzyme catalyses tRNA(Gly) + glycine + ATP = glycyl-tRNA(Gly) + AMP + diphosphate. The chain is Glycine--tRNA ligase beta subunit from Dictyoglomus turgidum (strain DSM 6724 / Z-1310).